A 74-amino-acid chain; its full sequence is ATP synthase F(1) complex subunit epsilon, mitochondrial (74 aa).

It belongs to the eukaryotic ATPase epsilon family. Component of the ATP synthase complex composed at least of ATP5F1A/subunit alpha, ATP5F1B/subunit beta, ATP5MC1/subunit c (homooctomer), MT-ATP6/subunit a, MT-ATP8/subunit 8, ATP5ME/subunit e, ATP5MF/subunit f, ATP5MG/subunit g, ATP5MK/subunit k, ATP5MJ/subunit j, ATP5F1C/subunit gamma, ATP5F1D/subunit delta, ATP5F1E/subunit epsilon, ATP5PF/subunit F6, ATP5PB/subunit b, ATP5PD/subunit d, ATP5PO/subunit OSCP. ATP synthase complex consists of a soluble F(1) head domain (subunits alpha(3) and beta(3)) - the catalytic core - and a membrane F(0) domain - the membrane proton channel (subunits c, a, 8, e, f, g, k and j). These two domains are linked by a central stalk (subunits gamma, delta, and epsilon) rotating inside the F1 region and a stationary peripheral stalk (subunits F6, b, d, and OSCP).

The protein resides in the mitochondrion. It localises to the mitochondrion inner membrane. Its function is as follows. Subunit epsilon, of the mitochondrial membrane ATP synthase complex (F(1)F(0) ATP synthase or Complex V) that produces ATP from ADP in the presence of a proton gradient across the membrane which is generated by electron transport complexes of the respiratory chain. ATP synthase complex consist of a soluble F(1) head domain - the catalytic core - and a membrane F(1) domain - the membrane proton channel. These two domains are linked by a central stalk rotating inside the F(1) region and a stationary peripheral stalk. During catalysis, ATP synthesis in the catalytic domain of F(1) is coupled via a rotary mechanism of the central stalk subunits to proton translocation. In vivo, can only synthesize ATP although its ATP hydrolase activity can be activated artificially in vitro. May be essential for the assembly of F(1) and may play an important role in the incorporation of the hydrophobic subunit c into the F(1)-c oligomer rotor of the mitochondrial ATP synthase complex. This chain is ATP synthase F(1) complex subunit epsilon, mitochondrial, found in Dictyostelium discoideum (Social amoeba).